We begin with the raw amino-acid sequence, 263 residues long: Kallikrein 1-related peptidase b27 (263 aa).

The signal sequence occupies residues 1 to 17 (MRFLILFLALSLGGIDA). Residues 18-24 (APPVQSR) constitute a propeptide, activation peptide. A Peptidase S1 domain is found at 25–260 (IIGGFKCKKN…FTSWIKDTMA (236 aa)). Disulfide bonds link Cys-31/Cys-175, Cys-50/Cys-66, Cys-154/Cys-221, Cys-186/Cys-200, and Cys-211/Cys-236. His-65 serves as the catalytic Charge relay system. Residues Asn-69 and Asn-105 are each glycosylated (N-linked (GlcNAc...) asparagine). Catalysis depends on Asp-122, which acts as the Charge relay system. Ser-215 acts as the Charge relay system in catalysis.

Belongs to the peptidase S1 family. Kallikrein subfamily. As to expression, expressed in testis and submaxillary gland. Not expressed in heart, brain, spleen, lung, liver, muscle, kidney and ovary. In the testis, expression localized specifically to Leydig cells in the interstitial tissues.

With respect to regulation, strongly inhibited by protease inhibitors diisopropyl fluorophosphate, phenylmethanesulfonyl fluoride and SBTI. Its function is as follows. Serine protease with chymotrypsin-like cleavage specificity. Shows activity towards casein, gelatin, IGFBP3 and fibronectin but not towards laminin or collagens I and IV. Does not hydrolyze kininogin to release Lys-bradykinin. The protein is Kallikrein 1-related peptidase b27 (Klk1b27) of Mus musculus (Mouse).